Consider the following 918-residue polypeptide: MARYRKPERVTRVISGSDEYVDFKKIDEEPTDKLDPNLGIIKSMPKLEPEEINDTLLRQTNLRSFKPGLSAVNDLDNESTPVVLAFGGINTARPDEYLNSSSVFVYHPDRNKWNFYTTMMEPRTYHAVGYFHRRVYVFGGYNPLHCRKGKMQATATTFQLTVQTKQWRKRADMRYARAHHNVTVMDERIFVFGGRDSNGEILAAVEMYEPEMDQWTTLASIPEPMMGSAIANNEGIIYVIGGVTTNKEKKPEGNLSNKIFCFDPLNNKWYRKPSLSSPRAFSAATTQNKKIWIWGGANLSEEGLLSSIDSIDVLDPKKGTLEHHMNFELAKHCHAVAKTGAHVFIVGGMSSVEASAIAETEMYDRKRNIIQRCSLLPVALTGIAVAAIPADTGGEYYEVPTSTPSSKAKPQPGSKPTSVKYKKQPDIHERNEAAKKVQRRWRRYIEQKSITKRMQQGDSSGSTMLEGNDRISGRIRTYISGYRPLPPDQDDLSKELVPVSIPFWPPDPDTTDSVFHTVRDQYRNPEEQMGFKHFYTIPRQMDPNLGMLLFMDEDYQHSKKVLGLRSVESVPYYINRFQASGTIQDNTIPVIIGTGGVDLRDPMNIAYGRSVFQYHPLKDRWEFFGYMPQPRNYHAAAYYRSAIYITGGYDPDVRTWGEMVATKTTFVYELASKNWTRMGDMRCARSHHSLLVFNDVLYAIGGRDDIGRLVSSVESYDHESNEWTMEKSMPSPRMGMAAVAHGGYIWLLGGLTSMTTEEPPVLDDVLCYDPVFKHWVDGRPLRIGRAFGNAAVCDNKIWLCGGAAPSTDENNYLVSVPAIDVYDEETMEWKQKTSLGCPRHSAIVVALESCLYIAGGVNSHELSATSRNELYMVDNDTIQTVRELPIPLTGMAAVTIPPKCVTFRSESLSIMIRHKVTP.

Kelch repeat units lie at residues Val82–Arg133, Arg134–Glu187, Arg188–Gly235, Ile237–Lys289, Ile291–Ala341, and His342–Ala390. Residues Glu398–Ile427 are disordered. The IQ domain maps to Arg430 to Ser459. Kelch repeat units follow at residues Val590–Ser641, Ala642–Asp695, Val696–Gly743, Ile745–Asn795, Ile797–Ser849, and Leu851–Pro898.

As to expression, sperm.

In terms of biological role, actin bundling protein found in the acrosomal sperm process. The polypeptide is Alpha-scruin (Limulus polyphemus (Atlantic horseshoe crab)).